Consider the following 264-residue polypeptide: S-adenosylmethionine decarboxylase proenzyme (264 aa).

Residue Ser-112 is the Schiff-base intermediate with substrate; via pyruvic acid of the active site. Ser-112 carries the pyruvic acid (Ser); by autocatalysis modification. Catalysis depends on His-117, which acts as the Proton acceptor; for processing activity. Cys-140 acts as the Proton donor; for catalytic activity in catalysis.

Belongs to the prokaryotic AdoMetDC family. Type 2 subfamily. In terms of assembly, heterooctamer of four alpha and four beta chains arranged as a tetramer of alpha/beta heterodimers. Pyruvate serves as cofactor. Is synthesized initially as an inactive proenzyme. Formation of the active enzyme involves a self-maturation process in which the active site pyruvoyl group is generated from an internal serine residue via an autocatalytic post-translational modification. Two non-identical subunits are generated from the proenzyme in this reaction, and the pyruvate is formed at the N-terminus of the alpha chain, which is derived from the carboxyl end of the proenzyme. The post-translation cleavage follows an unusual pathway, termed non-hydrolytic serinolysis, in which the side chain hydroxyl group of the serine supplies its oxygen atom to form the C-terminus of the beta chain, while the remainder of the serine residue undergoes an oxidative deamination to produce ammonia and the pyruvoyl group blocking the N-terminus of the alpha chain.

It catalyses the reaction S-adenosyl-L-methionine + H(+) = S-adenosyl 3-(methylsulfanyl)propylamine + CO2. The protein operates within amine and polyamine biosynthesis; S-adenosylmethioninamine biosynthesis; S-adenosylmethioninamine from S-adenosyl-L-methionine: step 1/1. Its function is as follows. Catalyzes the decarboxylation of S-adenosylmethionine to S-adenosylmethioninamine (dcAdoMet), the propylamine donor required for the synthesis of the polyamines spermine and spermidine from the diamine putrescine. In Escherichia coli O45:K1 (strain S88 / ExPEC), this protein is S-adenosylmethionine decarboxylase proenzyme.